The chain runs to 130 residues: Small ribosomal subunit protein uS8 (130 aa).

This sequence belongs to the universal ribosomal protein uS8 family. In terms of assembly, part of the 30S ribosomal subunit.

One of the primary rRNA binding proteins, it binds directly to 16S rRNA central domain where it helps coordinate assembly of the platform of the 30S subunit. This chain is Small ribosomal subunit protein uS8, found in Methanosphaerula palustris (strain ATCC BAA-1556 / DSM 19958 / E1-9c).